An 87-amino-acid chain; its full sequence is Small ribosomal subunit protein uS17 (87 aa).

This sequence belongs to the universal ribosomal protein uS17 family. As to quaternary structure, part of the 30S ribosomal subunit.

One of the primary rRNA binding proteins, it binds specifically to the 5'-end of 16S ribosomal RNA. The chain is Small ribosomal subunit protein uS17 from Onion yellows phytoplasma (strain OY-M).